The primary structure comprises 491 residues: Probable cytosol aminopeptidase (491 aa).

Residues K260 and D265 each contribute to the Mn(2+) site. Residue K272 is part of the active site. Residues D284, D343, and E345 each coordinate Mn(2+). R347 is an active-site residue.

Belongs to the peptidase M17 family. The cofactor is Mn(2+).

The protein localises to the cytoplasm. The enzyme catalyses Release of an N-terminal amino acid, Xaa-|-Yaa-, in which Xaa is preferably Leu, but may be other amino acids including Pro although not Arg or Lys, and Yaa may be Pro. Amino acid amides and methyl esters are also readily hydrolyzed, but rates on arylamides are exceedingly low.. The catalysed reaction is Release of an N-terminal amino acid, preferentially leucine, but not glutamic or aspartic acids.. Functionally, presumably involved in the processing and regular turnover of intracellular proteins. Catalyzes the removal of unsubstituted N-terminal amino acids from various peptides. The sequence is that of Probable cytosol aminopeptidase from Rippkaea orientalis (strain PCC 8801 / RF-1) (Cyanothece sp. (strain PCC 8801)).